We begin with the raw amino-acid sequence, 409 residues long: MHAWPASEVPALPGEGRDLRIHDTATGGVIPLHPGPVARIYVCGITPYDATHMGHAATYNAFDLVQRVWLDTKRQVHYVQNVTDVDDPLLERAERDGVDWVGLAEKETALFREDMTALRMLPPQHYIGAVEAIPGIVPLVERLRDAGAAYELDGDVYFSVEADPHFGKVSNLDAAAMRLLSAERGGDPDRPGKKNPLDPMLWMAAREGEPSWDGASLGRGRPGWHIECVAIALDHLGMGFDVQGGGSDLAFPHHEMGASHAQALTGEFPMAKAYVHAGMVALNGEKMSKSKGNLVFVSKLRRDGVDPAAIRLALLAHHYRSDWEWTDAVLEEALARLGTWRAAVSRPDGPPAEALVEEIRDALANDLDAPAALAAVDRWAALQHERGGTDEGAPGVVSRAVDALLGVAL.

Position 43 (Cys-43) interacts with Zn(2+). L-cysteinyl-5'-AMP-binding positions include Cys-43–Thr-46, Thr-58, and Asn-81–Thr-83. Residues Ile-45–His-55 carry the 'HIGH' region motif. The 'ERGGDP' region motif lies at Glu-183–Pro-188. Trp-224 contacts L-cysteinyl-5'-AMP. Cys-228 provides a ligand contact to Zn(2+). Gly-246–Asp-248 contributes to the L-cysteinyl-5'-AMP binding site. His-253 provides a ligand contact to Zn(2+). Val-280 is an L-cysteinyl-5'-AMP binding site. The short motif at Lys-286–Ser-290 is the 'KMSKS' region element.

It belongs to the class-I aminoacyl-tRNA synthetase family. MshC subfamily. In terms of assembly, monomer. Zn(2+) serves as cofactor.

It carries out the reaction 1D-myo-inositol 2-amino-2-deoxy-alpha-D-glucopyranoside + L-cysteine + ATP = 1D-myo-inositol 2-(L-cysteinylamino)-2-deoxy-alpha-D-glucopyranoside + AMP + diphosphate + H(+). Functionally, catalyzes the ATP-dependent condensation of GlcN-Ins and L-cysteine to form L-Cys-GlcN-Ins. The chain is L-cysteine:1D-myo-inositol 2-amino-2-deoxy-alpha-D-glucopyranoside ligase (mshC) from Streptomyces avermitilis (strain ATCC 31267 / DSM 46492 / JCM 5070 / NBRC 14893 / NCIMB 12804 / NRRL 8165 / MA-4680).